The sequence spans 333 residues: HTH-type transcriptional regulator Cphy_2742 (333 aa).

Residues 1 to 55 (MNIYDVSQKAGVSIATVSRVINGNPNVSEKTKQKVLDVMKEIGYTPNVFARGLGL) form the HTH lacI-type domain. Residues 3–22 (IYDVSQKAGVSIATVSRVIN) constitute a DNA-binding region (H-T-H motif).

The protein localises to the cytoplasm. Functionally, involved in control of pectin and galacturonic acid metabolism. Probably represses a comprehensive set of pectin fermentation genes by binding a conserved palindrome at or downstream of their transcription start site to block transcription. In the presence of galacturonic acid may activate transcription of acetate synthesis and other aspects of carbon metabolism. This is HTH-type transcriptional regulator Cphy_2742 from Lachnoclostridium phytofermentans (strain ATCC 700394 / DSM 18823 / ISDg) (Clostridium phytofermentans).